Here is a 271-residue protein sequence, read N- to C-terminus: Ribosomal RNA small subunit methyltransferase A (271 aa).

6 residues coordinate S-adenosyl-L-methionine: H11, L13, G38, E58, D86, and N101.

Belongs to the class I-like SAM-binding methyltransferase superfamily. rRNA adenine N(6)-methyltransferase family. RsmA subfamily.

It localises to the cytoplasm. The catalysed reaction is adenosine(1518)/adenosine(1519) in 16S rRNA + 4 S-adenosyl-L-methionine = N(6)-dimethyladenosine(1518)/N(6)-dimethyladenosine(1519) in 16S rRNA + 4 S-adenosyl-L-homocysteine + 4 H(+). Specifically dimethylates two adjacent adenosines (A1518 and A1519) in the loop of a conserved hairpin near the 3'-end of 16S rRNA in the 30S particle. May play a critical role in biogenesis of 30S subunits. In Helicobacter pylori (strain J99 / ATCC 700824) (Campylobacter pylori J99), this protein is Ribosomal RNA small subunit methyltransferase A.